The sequence spans 488 residues: Malonate-semialdehyde dehydrogenase 2 (488 aa).

Residues Phe-155, Lys-179, Glu-182, Arg-183, and Ser-232 each contribute to the NAD(+) site. The Nucleophile role is filled by Cys-287. Residue Glu-387 coordinates NAD(+).

This sequence belongs to the aldehyde dehydrogenase family. IolA subfamily. In terms of assembly, homotetramer.

The enzyme catalyses 3-oxopropanoate + NAD(+) + CoA + H2O = hydrogencarbonate + acetyl-CoA + NADH + H(+). It catalyses the reaction 2-methyl-3-oxopropanoate + NAD(+) + CoA + H2O = propanoyl-CoA + hydrogencarbonate + NADH + H(+). The protein operates within polyol metabolism; myo-inositol degradation into acetyl-CoA; acetyl-CoA from myo-inositol: step 7/7. Catalyzes the oxidation of malonate semialdehyde (MSA) and methylmalonate semialdehyde (MMSA) into acetyl-CoA and propanoyl-CoA, respectively. Is involved in a myo-inositol catabolic pathway. Bicarbonate, and not CO2, is the end-product of the enzymatic reaction. In Bacillus cereus (strain ZK / E33L), this protein is Malonate-semialdehyde dehydrogenase 2.